The chain runs to 114 residues: Nucleoid-associated protein CKL_3826 (114 aa).

This sequence belongs to the YbaB/EbfC family. Homodimer.

Its subcellular location is the cytoplasm. It localises to the nucleoid. Binds to DNA and alters its conformation. May be involved in regulation of gene expression, nucleoid organization and DNA protection. This is Nucleoid-associated protein CKL_3826 from Clostridium kluyveri (strain ATCC 8527 / DSM 555 / NBRC 12016 / NCIMB 10680 / K1).